A 336-amino-acid polypeptide reads, in one-letter code: tRNA(Ile)-lysidine synthase (336 aa).

Residue 21–26 (SGGLDS) participates in ATP binding.

This sequence belongs to the tRNA(Ile)-lysidine synthase family.

The protein resides in the cytoplasm. The catalysed reaction is cytidine(34) in tRNA(Ile2) + L-lysine + ATP = lysidine(34) in tRNA(Ile2) + AMP + diphosphate + H(+). Ligates lysine onto the cytidine present at position 34 of the AUA codon-specific tRNA(Ile) that contains the anticodon CAU, in an ATP-dependent manner. Cytidine is converted to lysidine, thus changing the amino acid specificity of the tRNA from methionine to isoleucine. This chain is tRNA(Ile)-lysidine synthase, found in Helicobacter pylori (strain ATCC 700392 / 26695) (Campylobacter pylori).